The following is an 89-amino-acid chain: UPF0175 protein APE_0276a (89 aa).

Belongs to the UPF0175 family.

This chain is UPF0175 protein APE_0276a, found in Aeropyrum pernix (strain ATCC 700893 / DSM 11879 / JCM 9820 / NBRC 100138 / K1).